Reading from the N-terminus, the 248-residue chain is Clathrin light chain A (248 aa).

Residues 1–92 are disordered; that stretch reads MAELDPFGAP…YYQESNGPTD (92 aa). A compositionally biased stretch (gly residues) spans 13–25; it reads APGGPALGNGVAG. The span at 61-71 shows a compositional bias: pro residues; sequence GPQPHGEPPGG. An involved in binding clathrin heavy chain region spans residues 100-162; it reads VDRLQSEPES…QLQKTKANNR (63 aa). Phosphoserine is present on residues S105 and S206. K223 bears the N6-acetyllysine mark. Residue S236 is modified to Phosphoserine. The residue at position 242 (K242) is an N6-acetyllysine.

This sequence belongs to the clathrin light chain family. Clathrin coats are formed from molecules containing 3 heavy chains and 3 light chains. Interacts with CALY; the interaction stimulates clathrin self-assembly and clathrin-mediated endocytosis. Interacts with CKAP5 and TACC3 forming the TACC3/ch-TOG/clathrin complex located at spindle inter-microtubules bridges; the complex implicates clathrin triskelions.

The protein resides in the cytoplasmic vesicle membrane. Its subcellular location is the membrane. It localises to the coated pit. It is found in the cytoplasm. The protein localises to the cytoskeleton. The protein resides in the spindle. Clathrin is the major protein of the polyhedral coat of coated pits and vesicles. Acts as a component of the TACC3/ch-TOG/clathrin complex proposed to contribute to stabilization of kinetochore fibers of the mitotic spindle by acting as inter-microtubule bridge. The chain is Clathrin light chain A (CLTA) from Homo sapiens (Human).